We begin with the raw amino-acid sequence, 193 residues long: Achaete-scute homolog 2 (193 aa).

2 disordered regions span residues Met-1–Arg-58 and Pro-128–Ser-177. The bHLH domain occupies Ala-50–Leu-102. Residues Pro-128–Arg-152 are compositionally biased toward low complexity.

Efficient DNA binding requires dimerization with another basic helix-loop-helix (bHLH) protein. Forms heterodimers with bHLH transcription factor TCF3. May not heterodimerise with bHLH protein HAND1. As to expression, expressed in placenta.

Its subcellular location is the nucleus. In terms of biological role, transcription factor. Binds to E-box motifs 5'-CANNTG-3' in the regulatory elements of target genes, probably as a heterodimer with another basic helix-loop-helix (bHLH) protein such as the transcription factor TCF3. May bind both open and closed chromatin, acting as a pioneer transcription factor to allow other factors to bind and activate lineage-specific genes. Required during post-implantation development for the generation of some differentiated trophoblast cell types. Transcriptional activity of ASCL2 may be antagonised in a subset of trophoblast cells by bHLH transcription factor HAND1, perhaps by competing for dimerization with other bHLH proteins. Involved in differentiation and function of follicular T-helper (Tfh) cells, thereby playing a role in germinal center responses; probably modulates expression of genes involved in Tfh cell function, such as BCL6. May also act as a suppressor of Th1-, Th2- and Th17-cell differentiation. Induces the formation of stem cells in intestinal crypts in vitro, synergistically activating transcription of target genes, such as SOX9, together with TCF4/beta-catenin. May form a bistable transcriptional switch, controlling expression of its own gene together with Wnt/R-spondin signaling, and thereby maintaining stem cell characteristics. Modulates expression of target genes, including perhaps down-regulating EGR1/Krox24 and chemokine CXCL10/Mob-1 and up-regulating CXCR4 and CDKN1C/p57kip2, in Schwann cells. May play a role in reducing proliferation of Schwann cells, perhaps acting via modulation of expression of CDKN1C. May be dispensable for blastocyst formation and later embryonic function. May be involved in the determination of neuronal precursors. The chain is Achaete-scute homolog 2 (ASCL2) from Bos taurus (Bovine).